Here is a 129-residue protein sequence, read N- to C-terminus: Small ribosomal subunit protein uS11 (129 aa).

It belongs to the universal ribosomal protein uS11 family. Part of the 30S ribosomal subunit. Interacts with proteins S7 and S18. Binds to IF-3.

Its function is as follows. Located on the platform of the 30S subunit, it bridges several disparate RNA helices of the 16S rRNA. Forms part of the Shine-Dalgarno cleft in the 70S ribosome. This chain is Small ribosomal subunit protein uS11, found in Rhodopseudomonas palustris (strain BisB18).